We begin with the raw amino-acid sequence, 83 residues long: Cytochrome b559 subunit alpha (83 aa).

The helical transmembrane segment at 21-35 (VIHSITIPSLFIAGW) threads the bilayer. His-23 is a heme binding site.

It belongs to the PsbE/PsbF family. As to quaternary structure, heterodimer of an alpha subunit and a beta subunit. PSII is composed of 1 copy each of membrane proteins PsbA, PsbB, PsbC, PsbD, PsbE, PsbF, PsbH, PsbI, PsbJ, PsbK, PsbL, PsbM, PsbT, PsbX, PsbY, PsbZ, Psb30/Ycf12, at least 3 peripheral proteins of the oxygen-evolving complex and a large number of cofactors. It forms dimeric complexes. Requires heme b as cofactor.

It localises to the plastid. The protein resides in the chloroplast thylakoid membrane. Its function is as follows. This b-type cytochrome is tightly associated with the reaction center of photosystem II (PSII). PSII is a light-driven water:plastoquinone oxidoreductase that uses light energy to abstract electrons from H(2)O, generating O(2) and a proton gradient subsequently used for ATP formation. It consists of a core antenna complex that captures photons, and an electron transfer chain that converts photonic excitation into a charge separation. The protein is Cytochrome b559 subunit alpha of Panax ginseng (Korean ginseng).